We begin with the raw amino-acid sequence, 221 residues long: Transcription factor MYB1 (221 aa).

HTH myb-type domains are found at residues 1–57 (MESV…LNYL) and 58–112 (RPNI…QKKL). 2 DNA-binding regions (H-T-H motif) span residues 33-57 (WHQV…LNYL) and 85-108 (WSLI…NTHL). Positions 126-154 (KTIVPKGTEAQPRAHPKSPPRPSPPSNNE) are disordered.

Expressed in stems and leaves. Expressed at low levels in ovaries.

Its subcellular location is the nucleus. In terms of biological role, transcription activator involved in the regulation of anthocyanin biosynthesis in red-fleshed kiwifruit varieties. Activates the transcription of genes involved in anthocyanin biosynthesis, such as dihydroflavonol reductase (DFR), anthocyanidin synthase (ANS) and UDP flavonoid glycosyltransferase (UFGT). This is Transcription factor MYB1 from Actinidia chinensis var. chinensis (Chinese soft-hair kiwi).